The sequence spans 83 residues: Large ribosomal subunit protein bL31 (83 aa).

It belongs to the bacterial ribosomal protein bL31 family. Type A subfamily. As to quaternary structure, part of the 50S ribosomal subunit.

Its function is as follows. Binds the 23S rRNA. This is Large ribosomal subunit protein bL31 from Gloeothece citriformis (strain PCC 7424) (Cyanothece sp. (strain PCC 7424)).